The sequence spans 527 residues: T-complex protein 1 subunit delta (527 aa).

Belongs to the TCP-1 chaperonin family. As to quaternary structure, heterooligomeric complex of about 850 to 900 kDa that forms two stacked rings, 12 to 16 nm in diameter.

Its subcellular location is the cytoplasm. Molecular chaperone; assists the folding of proteins upon ATP hydrolysis. Known to play a role, in vitro, in the folding of actin and tubulin. The polypeptide is T-complex protein 1 subunit delta (cct4) (Schizosaccharomyces pombe (strain 972 / ATCC 24843) (Fission yeast)).